Reading from the N-terminus, the 232-residue chain is Large ribosomal subunit protein uL1 (232 aa).

The protein belongs to the universal ribosomal protein uL1 family. Part of the 50S ribosomal subunit.

Its function is as follows. Binds directly to 23S rRNA. The L1 stalk is quite mobile in the ribosome, and is involved in E site tRNA release. In terms of biological role, protein L1 is also a translational repressor protein, it controls the translation of the L11 operon by binding to its mRNA. The sequence is that of Large ribosomal subunit protein uL1 from Ruegeria pomeroyi (strain ATCC 700808 / DSM 15171 / DSS-3) (Silicibacter pomeroyi).